The primary structure comprises 283 residues: Protein/nucleic acid deglycase HchA (283 aa).

Zn(2+)-binding residues include H86, E91, and H123. The active-site Nucleophile is the C185.

It belongs to the peptidase C56 family. HchA subfamily. As to quaternary structure, homodimer.

The protein resides in the cytoplasm. The catalysed reaction is N(omega)-(1-hydroxy-2-oxopropyl)-L-arginyl-[protein] + H2O = lactate + L-arginyl-[protein] + H(+). The enzyme catalyses N(6)-(1-hydroxy-2-oxopropyl)-L-lysyl-[protein] + H2O = lactate + L-lysyl-[protein] + H(+). It catalyses the reaction S-(1-hydroxy-2-oxopropyl)-L-cysteinyl-[protein] + H2O = lactate + L-cysteinyl-[protein] + H(+). It carries out the reaction N(omega)-(1-hydroxy-2-oxoethyl)-L-arginyl-[protein] + H2O = L-arginyl-[protein] + glycolate + H(+). The catalysed reaction is N(6)-(1-hydroxy-2-oxoethyl)-L-lysyl-[protein] + H2O = glycolate + L-lysyl-[protein] + H(+). The enzyme catalyses S-(1-hydroxy-2-oxoethyl)-L-cysteinyl-[protein] + H2O = glycolate + L-cysteinyl-[protein] + H(+). It catalyses the reaction N(2)-(1-hydroxy-2-oxopropyl)-dGTP + H2O = lactate + dGTP + H(+). It carries out the reaction N(2)-(1-hydroxy-2-oxopropyl)-GTP + H2O = lactate + GTP + H(+). The catalysed reaction is N(2)-(1-hydroxy-2-oxopropyl)-GDP + H2O = lactate + GDP + H(+). The enzyme catalyses N(2)-(1-hydroxy-2-oxopropyl)-GMP + H2O = lactate + GMP + H(+). It catalyses the reaction N(2)-(1-hydroxy-2-oxoethyl)-dGTP + H2O = dGTP + glycolate + H(+). It carries out the reaction N(2)-(1-hydroxy-2-oxoethyl)-GTP + H2O = glycolate + GTP + H(+). The catalysed reaction is N(2)-(1-hydroxy-2-oxoethyl)-GDP + H2O = glycolate + GDP + H(+). The enzyme catalyses N(2)-(1-hydroxy-2-oxoethyl)-GMP + H2O = glycolate + GMP + H(+). It catalyses the reaction an N(2)-(1-hydroxy-2-oxopropyl)-guanosine in RNA + H2O = a guanosine in RNA + lactate + H(+). It carries out the reaction an N(2)-(1-hydroxy-2-oxopropyl)-2'-deoxyguanosine in DNA + H2O = a 2'-deoxyguanosine in DNA + lactate + H(+). The catalysed reaction is an N(2)-(1-hydroxy-2-oxoethyl)-guanosine in RNA + H2O = a guanosine in RNA + glycolate + H(+). The enzyme catalyses an N(2)-(1-hydroxy-2-oxoethyl)-2'-deoxyguanosine in DNA + H2O = a 2'-deoxyguanosine in DNA + glycolate + H(+). In terms of biological role, protein and nucleotide deglycase that catalyzes the deglycation of the Maillard adducts formed between amino groups of proteins or nucleotides and reactive carbonyl groups of glyoxals. Thus, functions as a protein deglycase that repairs methylglyoxal- and glyoxal-glycated proteins, and releases repaired proteins and lactate or glycolate, respectively. Deglycates cysteine, arginine and lysine residues in proteins, and thus reactivates these proteins by reversing glycation by glyoxals. Acts on early glycation intermediates (hemithioacetals and aminocarbinols), preventing the formation of Schiff bases and advanced glycation endproducts (AGE). Also functions as a nucleotide deglycase able to repair glycated guanine in the free nucleotide pool (GTP, GDP, GMP, dGTP) and in DNA and RNA. Is thus involved in a major nucleotide repair system named guanine glycation repair (GG repair), dedicated to reversing methylglyoxal and glyoxal damage via nucleotide sanitization and direct nucleic acid repair. Plays an important role in protecting cells from carbonyl stress. This is Protein/nucleic acid deglycase HchA from Escherichia coli (strain K12 / MC4100 / BW2952).